The primary structure comprises 327 residues: GTPase Obg (327 aa).

The Obg domain maps to 1 to 159 (MQFIDQANII…WEVQLELKLL (159 aa)). Residues 160–327 (AEVGIIGLPN…SLLSEVWKRI (168 aa)) enclose the OBG-type G domain. Residues 166 to 173 (GLPNAGKS), 191 to 195 (FTTLI), 213 to 216 (DIPG), 280 to 283 (NKME), and 309 to 311 (SSS) each bind ATP. Mg(2+) contacts are provided by serine 173 and threonine 193.

This sequence belongs to the TRAFAC class OBG-HflX-like GTPase superfamily. OBG GTPase family. In terms of assembly, monomer. The cofactor is Mg(2+).

It localises to the cytoplasm. Functionally, an essential GTPase which binds GTP, GDP and possibly (p)ppGpp with moderate affinity, with high nucleotide exchange rates and a fairly low GTP hydrolysis rate. Plays a role in control of the cell cycle, stress response, ribosome biogenesis and in those bacteria that undergo differentiation, in morphogenesis control. This chain is GTPase Obg, found in Prochlorococcus marinus (strain MIT 9301).